The chain runs to 448 residues: MGKYFGTDGVRGVANRELTPELAFKIGRCGGYVLTKSAERPKVLIGRDTRISGHMLEGALVAGLLSIGAEVMRLGVISTPGVAYLTKALGAQAGIMISASHNPVQDNGIKFFGPDGFKLSDEQEQEIETLIDSPEDMLPRPIGSSLGQVNDYFEGGQKYLQYLKQTIDEDFSGMKIALDCAHGATSSLATYLFADLEADVITMGASPNGLNINEGVGSTHPEALAAFVKEKGADVGLAFDGDGDRLIAVDERGNIVDGDQIMYICAKYLKETGRLKQQTVVSTVMSNLGFYKALEAQGISSVQTAVGDRYVVEEMKKNGYNLGGEQSGHIIFLDYNTTGDGMLTALQLVNIMKIKGKPLSELAGEMKKYPQLLVNVRVTDKEKAMEHEQVKKVIAEVEAEMNGNGRVLVRPSGTEPLVRVMAEAPTEEACRTYVERIADVIRREMGVE.

Serine 100 acts as the Phosphoserine intermediate in catalysis. Mg(2+) is bound by residues serine 100, aspartate 240, aspartate 242, and aspartate 244. Serine 100 is modified (phosphoserine).

It belongs to the phosphohexose mutase family. It depends on Mg(2+) as a cofactor. Post-translationally, activated by phosphorylation.

The enzyme catalyses alpha-D-glucosamine 1-phosphate = D-glucosamine 6-phosphate. In terms of biological role, catalyzes the conversion of glucosamine-6-phosphate to glucosamine-1-phosphate. This is Phosphoglucosamine mutase from Geobacillus thermodenitrificans (strain NG80-2).